A 958-amino-acid polypeptide reads, in one-letter code: Valine--tRNA ligase (958 aa).

Residues 42–52 (PNVTGSLHMGH) carry the 'HIGH' region motif. A 'KMSKS' region motif is present at residues 554–558 (KMSKS). Lysine 557 provides a ligand contact to ATP. Residues 887–956 (LVDVAAEMAR…TEQKAEFAKL (70 aa)) are a coiled coil.

The protein belongs to the class-I aminoacyl-tRNA synthetase family. ValS type 1 subfamily. As to quaternary structure, monomer.

The protein resides in the cytoplasm. The enzyme catalyses tRNA(Val) + L-valine + ATP = L-valyl-tRNA(Val) + AMP + diphosphate. Functionally, catalyzes the attachment of valine to tRNA(Val). As ValRS can inadvertently accommodate and process structurally similar amino acids such as threonine, to avoid such errors, it has a 'posttransfer' editing activity that hydrolyzes mischarged Thr-tRNA(Val) in a tRNA-dependent manner. The chain is Valine--tRNA ligase from Shewanella oneidensis (strain ATCC 700550 / JCM 31522 / CIP 106686 / LMG 19005 / NCIMB 14063 / MR-1).